The following is a 437-amino-acid chain: GTPase Der (437 aa).

EngA-type G domains follow at residues 2 to 167 and 180 to 356; these read ATVL…EKKG and IRVA…NSLF. GTP contacts are provided by residues 8-15, 55-59, 118-121, 186-193, 233-237, and 299-302; these read GKSNVGKS, DTCGI, NKSE, GRPNAGKS, DTAGL, and NKID. In terms of domain architecture, KH-like spans 357-437; it reads YRVQTSAVNA…PIFLKFKNRH (81 aa).

This sequence belongs to the TRAFAC class TrmE-Era-EngA-EngB-Septin-like GTPase superfamily. EngA (Der) GTPase family. In terms of assembly, associates with the 50S ribosomal subunit.

Functionally, GTPase that plays an essential role in the late steps of ribosome biogenesis. This chain is GTPase Der, found in Thermosipho melanesiensis (strain DSM 12029 / CIP 104789 / BI429).